The sequence spans 164 residues: Phosphopantetheine adenylyltransferase (164 aa).

Serine 9 contributes to the substrate binding site. Residues serine 9–phenylalanine 10 and histidine 17 contribute to the ATP site. Positions 41, 78, and 92 each coordinate substrate. Residues glycine 93–arginine 95, glutamate 103, and valine 128–threonine 134 contribute to the ATP site.

This sequence belongs to the bacterial CoaD family. In terms of assembly, homohexamer. Mg(2+) is required as a cofactor.

The protein resides in the cytoplasm. The catalysed reaction is (R)-4'-phosphopantetheine + ATP + H(+) = 3'-dephospho-CoA + diphosphate. It participates in cofactor biosynthesis; coenzyme A biosynthesis; CoA from (R)-pantothenate: step 4/5. Functionally, reversibly transfers an adenylyl group from ATP to 4'-phosphopantetheine, yielding dephospho-CoA (dPCoA) and pyrophosphate. In Brucella suis (strain ATCC 23445 / NCTC 10510), this protein is Phosphopantetheine adenylyltransferase.